The following is a 438-amino-acid chain: Histidine--tRNA ligase (438 aa).

The protein belongs to the class-II aminoacyl-tRNA synthetase family. Homodimer.

The protein localises to the cytoplasm. It catalyses the reaction tRNA(His) + L-histidine + ATP = L-histidyl-tRNA(His) + AMP + diphosphate + H(+). This chain is Histidine--tRNA ligase, found in Blochmanniella pennsylvanica (strain BPEN).